The primary structure comprises 466 residues: Ferrochelatase-1, chloroplastic/mitochondrial (466 aa).

A compositionally biased stretch (polar residues) spans 1–11; it reads MQATALSSGFN. A disordered region spans residues 1 to 23; that stretch reads MQATALSSGFNPLTKRKDHRFPR. The N-terminal 35 residues, 1-35, are a transit peptide targeting the chloroplast and mitochondrion; it reads MQATALSSGFNPLTKRKDHRFPRSCSQRNSLSLIQ.

It belongs to the ferrochelatase family. In terms of tissue distribution, expressed in roots, leaves, stems and flowers. Present in both leaves and roots.

The protein resides in the plastid. It localises to the chloroplast membrane. Its subcellular location is the chloroplast thylakoid membrane. The protein localises to the mitochondrion. The catalysed reaction is heme b + 2 H(+) = protoporphyrin IX + Fe(2+). Its pathway is porphyrin-containing compound metabolism; protoheme biosynthesis; protoheme from protoporphyrin-IX: step 1/1. In terms of biological role, catalyzes the last step of heme biosynthesis by inserting ferrous iron into protoporphyrin IX to produce protoheme. Produces heme for photosynthetic cytochromes, but does not seem to be involved in stress responses. May be involved in wound-induced supply of heme to defensive hemoproteins outside plastids. Regulates the expression of photosynthesis-associated nuclear genes in undeveloped chloroplasts through production of heme. The protein is Ferrochelatase-1, chloroplastic/mitochondrial of Arabidopsis thaliana (Mouse-ear cress).